The chain runs to 147 residues: MSQSKDLQGGKAFGLLKAQQEERLDGINKHFLDDPKYSSDEDLQSKLEAFKTKYMEFDLNGNGDIDIMSLKRMLEKLGVPKTHLELKKLIREVSSGSEETFSYSDFLRMMLGKRSAILRMILMYEEKNKEHQKPTGPPAKKAISELP.

Residue Ser-2 is modified to N-acetylserine. Position 11 is an N6-acetyllysine (Lys-11). Phosphoserine is present on Ser-39. The 36-residue stretch at 45–80 (SKLEAFKTKYMEFDLNGNGDIDIMSLKRMLEKLGVP) folds into the EF-hand 1 domain. Ca(2+) contacts are provided by Asp-58, Asn-60, Asn-62, Asp-64, Glu-98, Thr-100, and Asp-105. One can recognise an EF-hand 2; degenerate domain in the interval 81–115 (KTHLELKKLIREVSSGSEETFSYSDFLRMMLGKRS). The segment at 127–147 (KNKEHQKPTGPPAKKAISELP) is disordered.

As to quaternary structure, homodimer (Potential). Monomer. Interacts with LCP1. In terms of tissue distribution, cardiac allograft, spleen and testis. Expressed by inflammatory cells (macrophages and neutrophils).

The protein resides in the cytoplasm. The protein localises to the cytoskeleton. Its subcellular location is the cell projection. It localises to the ruffle membrane. It is found in the phagocytic cup. Actin-binding protein that enhances membrane ruffling and RAC activation. Enhances the actin-bundling activity of LCP1. Binds calcium. Plays a role in RAC signaling and in phagocytosis. May play an role in macrophage activation and function. Promotes the proliferation of vascular smooth muscle cells and of T-lymphocytes. Enhances lymphocyte migration. Plays a role in vascular inflammation. The protein is Allograft inflammatory factor 1 (Aif1) of Rattus norvegicus (Rat).